Consider the following 426-residue polypeptide: Glutamate-1-semialdehyde 2,1-aminomutase (426 aa).

At Lys265 the chain carries N6-(pyridoxal phosphate)lysine.

Belongs to the class-III pyridoxal-phosphate-dependent aminotransferase family. HemL subfamily. As to quaternary structure, homodimer. Pyridoxal 5'-phosphate is required as a cofactor.

The protein resides in the cytoplasm. It catalyses the reaction (S)-4-amino-5-oxopentanoate = 5-aminolevulinate. It participates in porphyrin-containing compound metabolism; protoporphyrin-IX biosynthesis; 5-aminolevulinate from L-glutamyl-tRNA(Glu): step 2/2. This chain is Glutamate-1-semialdehyde 2,1-aminomutase, found in Neisseria gonorrhoeae (strain NCCP11945).